A 552-amino-acid polypeptide reads, in one-letter code: Putative pentatricopeptide repeat-containing protein At1g64310 (552 aa).

PPR repeat units lie at residues 39–69 (DPYF…FPER), 70–104 (SVFL…DTRP), 105–139 (DNFT…GLGF), 140–170 (DQIC…IPDP), 171–205 (DLAL…GHQP), 206–240 (NCYT…NLDS), 241–271 (HSYV…ISEP), 272–306 (DLVA…GKKP), 307–341 (DCVL…GLEL), 342–372 (DIKV…IPEK), 373–407 (NIVS…GLIP), 408–438 (DEIT…MKSE), and 444–474 (QTEH…LQKP). Residues 479 to 552 (ILGALLSCCE…GGKLPGISWF (74 aa)) form a type E motif; degenerate region.

This sequence belongs to the PPR family. PCMP-E subfamily.

The polypeptide is Putative pentatricopeptide repeat-containing protein At1g64310 (PCMP-E65) (Arabidopsis thaliana (Mouse-ear cress)).